The chain runs to 943 residues: Isoleucine--tRNA ligase (943 aa).

The 'HIGH' region signature appears at P59–H69. E577 serves as a coordination point for L-isoleucyl-5'-AMP. Positions K618–S622 match the 'KMSKS' region motif. Residue K621 coordinates ATP. The Zn(2+) site is built by C906, C909, C926, and C929.

This sequence belongs to the class-I aminoacyl-tRNA synthetase family. IleS type 1 subfamily. As to quaternary structure, monomer. It depends on Zn(2+) as a cofactor.

The protein localises to the cytoplasm. The catalysed reaction is tRNA(Ile) + L-isoleucine + ATP = L-isoleucyl-tRNA(Ile) + AMP + diphosphate. Catalyzes the attachment of isoleucine to tRNA(Ile). As IleRS can inadvertently accommodate and process structurally similar amino acids such as valine, to avoid such errors it has two additional distinct tRNA(Ile)-dependent editing activities. One activity is designated as 'pretransfer' editing and involves the hydrolysis of activated Val-AMP. The other activity is designated 'posttransfer' editing and involves deacylation of mischarged Val-tRNA(Ile). This is Isoleucine--tRNA ligase from Xylella fastidiosa (strain M23).